The sequence spans 244 residues: Thiol S-methyltransferase TMT1B (244 aa).

The first 23 residues, 1–23 (MDVLVPLLQLLVLLLTLPLHLLA), serve as a signal peptide directing secretion.

It belongs to the methyltransferase superfamily. In terms of tissue distribution, highly expressed in liver and kidney. No expression in testis, heart, lung, brain, spleen or cultured fibroblasts.

It localises to the endoplasmic reticulum membrane. The protein localises to the lipid droplet. Its subcellular location is the microsome. The protein resides in the cytoplasm. It is found in the cytosol. The catalysed reaction is a thiol + S-adenosyl-L-methionine = a methyl thioether + S-adenosyl-L-homocysteine + H(+). Thiol S-methyltransferase that catalyzes the transfer of a methyl group from S-adenosyl-L-methionine to alkyl and phenolic thiol-containing acceptor substrates. Together with TMT1B accounts for most of S-thiol methylation activity in the endoplasmic reticulum of hepatocytes. Selectively methylates S-centered nucleophiles from metabolites such as hydrogen sulfide and dithiothreitol. In Rattus norvegicus (Rat), this protein is Thiol S-methyltransferase TMT1B (Tmt1b).